We begin with the raw amino-acid sequence, 956 residues long: MPRVSAPLVLLPAWLLMVACSPHSLRIAAILDDPMECSRGERLSITLAKNRINRAPERLGKAKVEVDIFELLRDSEYETAETMCQILPKGVVAVLGPSSSPASSSIISNICGEKEVPHFKVAPEEFVRFQLQRFTTLNLHPSNTDISVAVAGILNFFNCTTACLICAKAECLLNLEKLLRQFLISKDTLSVRMLDDTRDPTPLLKEIRDDKTATIIIHANASMSHTILLKAAELGMVSAYYTYIFTNLEFSLQRMDSLVDDRVNILGFSIFNQSHAFFQEFSQSLNQSWQENCDHVPFTGPALSSALLFDAVYAVVTAVQELNRSQEIGVKPLSCGSAQIWQHGTSLMNYLRMVELEGLTGHIEFNSKGQRSNYALKILQFTRNGFRQIGQWHVAEGLSMDSRLYASNISDSLFNTTLVVTTILENPYLMLKGNHQDMEGNDRYEGFCVDMLKELAEILRFNYKIRLVGDGVYGVPEANGTWTGMVGELIARKADLAVAGLTITAEREKVIDFSKPFMTLGISILYRVHMGRRPGYFSSLDPFSPGVWLFMLLAYLAVSCVLFLVARLTPYEWYSPHPCAQGRCNLLVNQYSLGNSLWFPVGGFMQQGSTIAPRALSTRCVSGVWWAFTLIIISSYTANLAAFLTVQRMEVPIESVDDLADQTAIEYGTIHGGSSMTFFQNSRYQTYQRMWNYMYSKQPSVFVKSTEEGIARVLNSNYAFLLESTMNEYYRQRNCNLTQIGGLLDTKGYGIGMPVGSVFRDEFDLAILQLQENNRLEILKRKWWEGGKCPKEEDHRAKGLGMENIGGIFVVLICGLIVAIFMAMLEFLWTLRHSEASEVSVCQEMMTELRSIILCQDNIHPRRRRSGGLPPQPPVLEERRPRGTATLSNGKLCGAGEPDQLAQRLAQEAALVARGCTHIRVCPECRRFQGLRARPSPARSEESLEWDKTTNSSEPE.

A signal peptide spans 1–20 (MPRVSAPLVLLPAWLLMVAC). The Extracellular portion of the chain corresponds to 21–545 (SPHSLRIAAI…YFSSLDPFSP (525 aa)). 8 N-linked (GlcNAc...) asparagine glycosylation sites follow: Asn158, Asn220, Asn272, Asn286, Asn323, Asn408, Asn415, and Asn479. Residues Gly500, Thr502, and Arg507 each coordinate L-glutamate. A helical transmembrane segment spans residues 546-566 (GVWLFMLLAYLAVSCVLFLVA). The Cytoplasmic segment spans residues 567–623 (RLTPYEWYSPHPCAQGRCNLLVNQYSLGNSLWFPVGGFMQQGSTIAPRALSTRCVSG). The helical transmembrane segment at 624–644 (VWWAFTLIIISSYTANLAAFL) threads the bilayer. The Extracellular segment spans residues 645 to 804 (TVQRMEVPIE…HRAKGLGMEN (160 aa)). L-glutamate-binding residues include Ser674, Ser675, and Glu723. Asn736 carries an N-linked (GlcNAc...) asparagine glycan. The chain crosses the membrane as a helical span at residues 805–825 (IGGIFVVLICGLIVAIFMAML). Over 826–956 (EFLWTLRHSE…DKTTNSSEPE (131 aa)) the chain is Cytoplasmic. Residues 931 to 956 (LRARPSPARSEESLEWDKTTNSSEPE) form a disordered region. Residues 939-948 (RSEESLEWDK) show a composition bias toward basic and acidic residues.

Belongs to the glutamate-gated ion channel (TC 1.A.10.1) family. GRIK4 subfamily. Homodimer. Can form functional heteromeric receptors with GRIK1, GRIK2 and GRIK3. In terms of tissue distribution, strong expression in hippocampal CA3 pyramidal cells. Low expression in hippocampal dentate granule cells, in layers II, V and VI of the cortex, and in cerebellar Purkinje cells. No expression in the striatum, reticular thalamus, hypothalamus or amygdaloid complex.

The protein localises to the cell membrane. Its subcellular location is the postsynaptic cell membrane. The protein resides in the presynaptic cell membrane. Functionally, ionotropic glutamate receptor that functions as a cation-permeable ligand-gated ion channel, gated by L-glutamate and the glutamatergic agonist kainic acid. Cannot form functional channels on its own and shows channel activity only in heteromeric assembly with GRIK1, GRIK2 and GRIK3 subunits. This is Glutamate receptor ionotropic, kainate 4 (Grik4) from Rattus norvegicus (Rat).